Consider the following 324-residue polypeptide: Glyoxylate/hydroxypyruvate reductase B (324 aa).

Catalysis depends on residues R237 and E266. H285 (proton donor) is an active-site residue.

The protein belongs to the D-isomer specific 2-hydroxyacid dehydrogenase family. GhrB subfamily. In terms of assembly, homodimer.

It localises to the cytoplasm. The enzyme catalyses glycolate + NADP(+) = glyoxylate + NADPH + H(+). It carries out the reaction (R)-glycerate + NAD(+) = 3-hydroxypyruvate + NADH + H(+). The catalysed reaction is (R)-glycerate + NADP(+) = 3-hydroxypyruvate + NADPH + H(+). Functionally, catalyzes the NADPH-dependent reduction of glyoxylate and hydroxypyruvate into glycolate and glycerate, respectively. This Salmonella schwarzengrund (strain CVM19633) protein is Glyoxylate/hydroxypyruvate reductase B.